A 163-amino-acid chain; its full sequence is uncharacterized protein (163 aa).

This is an uncharacterized protein from Mycoplasma pneumoniae (strain ATCC 29342 / M129 / Subtype 1) (Mycoplasmoides pneumoniae).